Reading from the N-terminus, the 336-residue chain is Anthranilate phosphoribosyltransferase (336 aa).

Residues glycine 79, 82 to 83, threonine 87, 89 to 92, 107 to 115, and serine 119 each bind 5-phospho-alpha-D-ribose 1-diphosphate; these read GD, NIST, and KHGNRSVSS. Glycine 79 serves as a coordination point for anthranilate. Position 91 (serine 91) interacts with Mg(2+). Asparagine 110 is an anthranilate binding site. Anthranilate is bound at residue arginine 165. 2 residues coordinate Mg(2+): aspartate 224 and glutamate 225.

It belongs to the anthranilate phosphoribosyltransferase family. In terms of assembly, homodimer. Requires Mg(2+) as cofactor.

It catalyses the reaction N-(5-phospho-beta-D-ribosyl)anthranilate + diphosphate = 5-phospho-alpha-D-ribose 1-diphosphate + anthranilate. The protein operates within amino-acid biosynthesis; L-tryptophan biosynthesis; L-tryptophan from chorismate: step 2/5. Functionally, catalyzes the transfer of the phosphoribosyl group of 5-phosphorylribose-1-pyrophosphate (PRPP) to anthranilate to yield N-(5'-phosphoribosyl)-anthranilate (PRA). This is Anthranilate phosphoribosyltransferase from Endomicrobium trichonymphae.